The following is a 397-amino-acid chain: Pyruvate dehydrogenase E1 component subunit alpha, mitochondrial (397 aa).

10 residues coordinate pyruvate: His-98, Tyr-124, Arg-125, Gly-173, Val-175, Asp-204, Gly-205, Ala-206, Asn-233, and Tyr-235. Thiamine diphosphate contacts are provided by Tyr-124, Arg-125, Gly-173, Val-175, Asp-204, Gly-205, Ala-206, and Asn-233. Residue Asp-204 coordinates Mg(2+). Mg(2+) is bound by residues Asn-233 and Tyr-235. Residue His-299 participates in thiamine diphosphate binding.

Tetramer of 2 alpha and 2 beta subunits. Requires thiamine diphosphate as cofactor. The cofactor is Mg(2+).

It is found in the mitochondrion matrix. The catalysed reaction is N(6)-[(R)-lipoyl]-L-lysyl-[protein] + pyruvate + H(+) = N(6)-[(R)-S(8)-acetyldihydrolipoyl]-L-lysyl-[protein] + CO2. E1 activity is regulated by phosphorylation (inactivation) and dephosphorylation (activation) of the alpha subunit. The pyruvate dehydrogenase complex catalyzes the overall conversion of pyruvate to acetyl-CoA and CO(2). It contains multiple copies of three enzymatic components: pyruvate dehydrogenase (E1), dihydrolipoamide acetyltransferase (E2) and lipoamide dehydrogenase (E3). The sequence is that of Pyruvate dehydrogenase E1 component subunit alpha, mitochondrial from Pisum sativum (Garden pea).